Consider the following 317-residue polypeptide: Succinate receptor 1 (317 aa).

The Extracellular segment spans residues 1–23 (MAQNLSCENWLATEAILNKYYLS). N-linked (GlcNAc...) asparagine glycosylation is present at Asn-4. Residues 24–47 (AFYAIEFIFGLLGNVTVVFGYLFC) form a helical membrane-spanning segment. The Cytoplasmic portion of the chain corresponds to 48 to 55 (MKNWNSSN). The helical transmembrane segment at 56–76 (VYLFNLSISDFAFLCTLPILI) threads the bilayer. The Extracellular segment spans residues 77 to 101 (KSYANDKGTYGDVLCISNRYVLHTN). Cys-91 and Cys-168 are joined by a disulfide. The helical transmembrane segment at 102 to 119 (LYTSILFLTFISMDRYLL) threads the bilayer. The Cytoplasmic segment spans residues 120–133 (MKYPFREHFLQKKE). The chain crosses the membrane as a helical span at residues 134-157 (FAILISLAVWALVTLEVLPMLTFI). Residues 158-180 (NSVPKEEGSNCIDYASSGNPEHN) are Extracellular-facing. A helical transmembrane segment spans residues 181–204 (LIYSLCLTLLGFLIPLSVMCFFYY). Topologically, residues 205–228 (KMVVFLKRRSQQQATALPLDKPQR) are cytoplasmic. A helical transmembrane segment spans residues 229–246 (LVVLAVVIFSILFTPYHI). Over 247-277 (MRNLRIASRLDSWPQGCTQKAIKSIYTLTRP) the chain is Extracellular. The chain crosses the membrane as a helical span at residues 278-294 (LAFLNSAINPIFYFLMG). The Cytoplasmic portion of the chain corresponds to 295 to 317 (DHYREMLISKFRQYFKSLTSFRT).

This sequence belongs to the G-protein coupled receptor 1 family. As to expression, predominantly expressed in the kidney (proximal and distal tubules and the juxtaglomerular apparatus). Weakly expressed in liver, spleen and small intestine. Highly expressed in immature dendritic cells, expression rapidly downregulates after maturation. Also expressed in macrophages. Specifically expressed in intestinal tuft cells. Expression in whole muscle is attributable to major non-myofibrillar resident cell types, including stromal, endothelial and satellite cell populations.

It localises to the cell membrane. Its function is as follows. G protein-coupled receptor for succinate able to mediate signaling through Gq/GNAQ or Gi/GNAI second messengers depending on the cell type and the processes regulated. Succinate-SUCNR1 signaling serves as a link between metabolic stress, inflammation and energy homeostasis. In macrophages, plays a range of immune-regulatory roles. During inflammation, succinate-SUCNR1 signaling may act as an anti-inflammatory mediator or boost inflammation depending on the inflammatory status of cells. Hyperpolarizes M2 macrophages versus M1 phenotype through Gq signaling by regulating the transcription of genes involved in immune function. In activated M1 macrophages, plays a pro-inflammatory role in response to LPS. Expressed in dendritic cells, where it is involved in the sensing of immunological danger and enhances immunity. Mediates succinate triggered intracelleular calcium mobilization, induces migratory responses and acts in synergy with Toll-like receptor ligands for the production of proinflammatory cytokines as well as an enhancement of antigen-specific activation of helper T cells. In the small intestine, mediates the activation of tuft cells by dietary succinate and triggers type 2 immunity. In adipocytes, plays an important role in the control of energy metabolism. In response to succinate, controls leptin expression in an AMPK-JNK-CEBPA-dependent as well as circadian clock-regulated manner. In muscle tissue, is expressed in non-muscle cells and coordinates muscle remodeling in response to the succinate produced during exercise training in a paracrine manner. In retina, acts as a mediator of vessel growth during retinal development. In response to succinate, regulates the production of angiogenic factors, including VEGF, by retinal ganglion neurons. In Mus musculus (Mouse), this protein is Succinate receptor 1 (Sucnr1).